Reading from the N-terminus, the 350-residue chain is Renin receptor (350 aa).

The N-terminal stretch at 1–17 (MAVLVVLLSSLVSSALA) is a signal peptide. Topologically, residues 18–302 (NEFSILRSPG…YNLAYKYNLE (285 aa)) are extracellular. Residues 303-323 (YSVVFNLVLWIMTGLALAVII) form a helical membrane-spanning segment. The Cytoplasmic portion of the chain corresponds to 324–350 (TSYNIWNMDPGYDSIIYRMTNQKIRMD). The Mediates retrograde transport to the ER signature appears at 346–350 (KIRMD).

In terms of assembly, interacts with renin. Accessory component of the multisubunit proton-transporting vacuolar (V)-ATPase protein pump. Interacts (via N-terminus) with ATP6AP1 (via N-terminus). Interacts with ATP6V0D1; ATP6V0D1 is a V-ATPase complex subunit and the interaction promotes V-ATPase complex assembly. Interacts with TMEM9; TMEM9 is a V-ATPase assembly regulator and the interaction induces the interaction with ATP6V0D1. Interacts with VMA21 (via N-terminus); VMA21 is a V-ATPase accessory component. Phosphorylated. In terms of processing, proteolytically cleaved by a furin-like convertase in the trans-Golgi network to generate N- and C-terminal fragments. As to expression, expressed in the brain.

Its subcellular location is the endoplasmic reticulum membrane. It localises to the lysosome membrane. It is found in the cytoplasmic vesicle. The protein localises to the autophagosome membrane. The protein resides in the cell projection. Its subcellular location is the dendritic spine membrane. It localises to the axon. It is found in the endosome membrane. The protein localises to the clathrin-coated vesicle membrane. The protein resides in the secretory vesicle. Its subcellular location is the synaptic vesicle membrane. Multifunctional protein which functions as a renin, prorenin cellular receptor and is involved in the assembly of the lysosomal proton-transporting V-type ATPase (V-ATPase) and the acidification of the endo-lysosomal system. May mediate renin-dependent cellular responses by activating ERK1 and ERK2. By increasing the catalytic efficiency of renin in AGT/angiotensinogen conversion to angiotensin I, may also play a role in the renin-angiotensin system (RAS). Through its function in V-type ATPase (v-ATPase) assembly and acidification of the lysosome it regulates protein degradation and may control different signaling pathways important for proper brain development, synapse morphology and synaptic transmission. The chain is Renin receptor (Atp6ap2) from Rattus norvegicus (Rat).